Reading from the N-terminus, the 127-residue chain is Holo-[acyl-carrier-protein] synthase (127 aa).

Mg(2+)-binding residues include Asp9 and Glu58.

Belongs to the P-Pant transferase superfamily. AcpS family. Mg(2+) is required as a cofactor.

The protein localises to the cytoplasm. It catalyses the reaction apo-[ACP] + CoA = holo-[ACP] + adenosine 3',5'-bisphosphate + H(+). Functionally, transfers the 4'-phosphopantetheine moiety from coenzyme A to a Ser of acyl-carrier-protein. The polypeptide is Holo-[acyl-carrier-protein] synthase (Shewanella baltica (strain OS195)).